We begin with the raw amino-acid sequence, 460 residues long: Proton extrusion protein PxcA (460 aa).

Disordered stretches follow at residues 82-128 (FSRL…QRRD) and 143-190 (SRYK…GSGN). Positions 90-102 (QNGSGPTSAQDKA) are enriched in polar residues. The span at 107–120 (AAEANVSESSSENS) shows a compositional bias: low complexity. A compositionally biased stretch (polar residues) spans 151-163 (KSQPISASISTSP). Over residues 171-184 (QPTSTQPSSSNVSV) the composition is skewed to low complexity. The next 4 membrane-spanning stretches (helical) occupy residues 242 to 262 (FLLL…NFLF), 337 to 357 (GLKN…LIFV), 373 to 393 (IYGL…DVFV), and 420 to 440 (FIYG…KYWI).

It belongs to the CemA family.

Its subcellular location is the cell inner membrane. Its function is as follows. Required for H(+) efflux immediately after light irradiation to form a rapid H(+) concentration gradient across the thylakoid membranes. Together with PxcL, contributes to transient H(+) uptake following dark to light transition. The sequence is that of Proton extrusion protein PxcA from Synechococcus sp. (strain JA-2-3B'a(2-13)) (Cyanobacteria bacterium Yellowstone B-Prime).